The following is a 400-amino-acid chain: Argininosuccinate synthase (400 aa).

8 to 16 (AYSGGLDTS) is a binding site for ATP. Y87 lines the L-citrulline pocket. G117 contacts ATP. T119, N123, and D124 together coordinate L-aspartate. N123 contacts L-citrulline. Residues R127, S175, E260, and Y272 each contribute to the L-citrulline site.

Belongs to the argininosuccinate synthase family. Type 1 subfamily. Homotetramer.

It is found in the cytoplasm. It catalyses the reaction L-citrulline + L-aspartate + ATP = 2-(N(omega)-L-arginino)succinate + AMP + diphosphate + H(+). The protein operates within amino-acid biosynthesis; L-arginine biosynthesis; L-arginine from L-ornithine and carbamoyl phosphate: step 2/3. The protein is Argininosuccinate synthase of Mycobacterium sp. (strain KMS).